We begin with the raw amino-acid sequence, 242 residues long: UPF0246 protein SPH_1662 (242 aa).

The protein belongs to the UPF0246 family.

This Streptococcus pneumoniae (strain Hungary19A-6) protein is UPF0246 protein SPH_1662.